The chain runs to 560 residues: MAKIISFDEESRRALERGVNALADAVKITLGPKGRNVLLEKKYGTPQIVNDGITVAKEIELEDPLENTGARLIQEVASKTKDVAGDGTTTATVLVQALIREGLKNVAAGTNPVSLKRGIDKTTEALVAEIAKVAKPVEGSAIAQVATVSSGNDEEVGAMIAQAVEKVTKDGVITVEESKSLTTELEVVEGMQIDRGYISPYFITNNERQTVELENVRILITDKKISSIQELVPVLEKVARLGQPLLIIAEDVEGDALATLVVNKARGVLSVAAIKAPGFGERRKALLQDIAILTDGQLISEEIGLSLDTASLEALGTAQKITIEKDNTTIVAGNTTKPEIQKRIAQIRRQLEETDSEYDSEKLQERIAKLAGGIAVIKVGAATETELKDRKLRIEDALNATKAAVAEGIVPGGGKTLIYLASKVDEIKKNFDEEEKIGADIVKRALEAPLRQIADNAGAEGSVIVSRVKDSDFNIGYNAATGEFEDLIAAGIIDPAKVVRSALQNAASIAGLVLTTEAIVVEKPEKKSAAPADAGMGGMGGMGGMGGMGGMGGMGGMGMF.

ATP is bound by residues 29-32, 86-90, G413, 478-480, and D494; these read TLGP, DGTTT, and NAA.

It belongs to the chaperonin (HSP60) family. Forms a cylinder of 14 subunits composed of two heptameric rings stacked back-to-back. Interacts with the co-chaperonin GroES.

The protein resides in the cytoplasm. The catalysed reaction is ATP + H2O + a folded polypeptide = ADP + phosphate + an unfolded polypeptide.. Its function is as follows. Together with its co-chaperonin GroES, plays an essential role in assisting protein folding. The GroEL-GroES system forms a nano-cage that allows encapsulation of the non-native substrate proteins and provides a physical environment optimized to promote and accelerate protein folding. The polypeptide is Chaperonin GroEL 2 (Nostoc sp. (strain PCC 7120 / SAG 25.82 / UTEX 2576)).